The chain runs to 578 residues: Septation ring formation regulator EzrA (578 aa).

Over 1 to 8 (MKNNWIII) the chain is Extracellular. The chain crosses the membrane as a helical span at residues 9–27 (LVLVIVIIAAVLYLIGYFM). Residues 28–578 (RKKNQEQLDE…NINNPNLTAI (551 aa)) lie on the Cytoplasmic side of the membrane. Coiled-coil stretches lie at residues 103 to 165 (RFMK…DDKA), 256 to 285 (QNFA…AAVE), and 394 to 490 (KILD…DDLE).

The protein belongs to the EzrA family.

It localises to the cell membrane. Functionally, negative regulator of FtsZ ring formation; modulates the frequency and position of FtsZ ring formation. Inhibits FtsZ ring formation at polar sites. Interacts either with FtsZ or with one of its binding partners to promote depolymerization. This is Septation ring formation regulator EzrA from Enterococcus faecalis (strain ATCC 700802 / V583).